Reading from the N-terminus, the 612-residue chain is Dihydroxy-acid dehydratase (612 aa).

A Mg(2+)-binding site is contributed by D81. C122 serves as a coordination point for [2Fe-2S] cluster. Residues D123 and K124 each coordinate Mg(2+). Position 124 is an N6-carboxylysine (K124). C196 lines the [2Fe-2S] cluster pocket. E492 contacts Mg(2+). The Proton acceptor role is filled by S518.

It belongs to the IlvD/Edd family. Homodimer. [2Fe-2S] cluster serves as cofactor. The cofactor is Mg(2+).

It carries out the reaction (2R)-2,3-dihydroxy-3-methylbutanoate = 3-methyl-2-oxobutanoate + H2O. It catalyses the reaction (2R,3R)-2,3-dihydroxy-3-methylpentanoate = (S)-3-methyl-2-oxopentanoate + H2O. It participates in amino-acid biosynthesis; L-isoleucine biosynthesis; L-isoleucine from 2-oxobutanoate: step 3/4. The protein operates within amino-acid biosynthesis; L-valine biosynthesis; L-valine from pyruvate: step 3/4. In terms of biological role, functions in the biosynthesis of branched-chain amino acids. Catalyzes the dehydration of (2R,3R)-2,3-dihydroxy-3-methylpentanoate (2,3-dihydroxy-3-methylvalerate) into 2-oxo-3-methylpentanoate (2-oxo-3-methylvalerate) and of (2R)-2,3-dihydroxy-3-methylbutanoate (2,3-dihydroxyisovalerate) into 2-oxo-3-methylbutanoate (2-oxoisovalerate), the penultimate precursor to L-isoleucine and L-valine, respectively. The sequence is that of Dihydroxy-acid dehydratase from Cereibacter sphaeroides (strain ATCC 17029 / ATH 2.4.9) (Rhodobacter sphaeroides).